Here is a 354-residue protein sequence, read N- to C-terminus: Arginase-2, mitochondrial (354 aa).

The N-terminal 22 residues, 1-22, are a transit peptide targeting the mitochondrion; it reads MSYGSCVSRLLRTRVQSVLKKS. The Mn(2+) site is built by histidine 120, aspartate 143, histidine 145, and aspartate 147. Residues 145–149, 156–158, and aspartate 202 contribute to the substrate site; these read HADIN and SGN. Mn(2+) is bound by residues aspartate 251 and aspartate 253. Substrate contacts are provided by threonine 265 and glutamate 296. The disordered stretch occupies residues 330–354; sequence GHTVYEQLPPPSSPHESENAERVRI. Basic and acidic residues predominate over residues 344–354; the sequence is HESENAERVRI.

This sequence belongs to the arginase family. In terms of assembly, homotrimer. The cofactor is Mn(2+).

Its subcellular location is the mitochondrion. It carries out the reaction L-arginine + H2O = urea + L-ornithine. It functions in the pathway nitrogen metabolism; urea cycle; L-ornithine and urea from L-arginine: step 1/1. May play a role in the regulation of extra-urea cycle arginine metabolism and also in down-regulation of nitric oxide synthesis. Extrahepatic arginase functions to regulate L-arginine bioavailability to nitric oxid synthase (NOS). Arginine metabolism is a critical regulator of innate and adaptive immune responses. Seems to be involved in negative regulation of the survival capacity of activated T cells. May suppress inflammation-related signaling in asthmatic airway epithelium. May play a role in promoting prenatal immune suppression. Regulates RPS6KB1 signaling, which promotes endothelial cell senescence and inflammation and implicates NOS3/eNOS dysfunction. Can inhibit endothelial autophagy independently of its enzymatic activity implicating mTORC2 signaling. Involved in vascular smooth muscle cell senescence and apoptosis independently of its enzymatic activity. The polypeptide is Arginase-2, mitochondrial (ARG2) (Oryctolagus cuniculus (Rabbit)).